Reading from the N-terminus, the 241-residue chain is Probable transcriptional regulatory protein Rpic_2388 (241 aa).

The protein belongs to the TACO1 family.

Its subcellular location is the cytoplasm. This chain is Probable transcriptional regulatory protein Rpic_2388, found in Ralstonia pickettii (strain 12J).